The following is a 163-amino-acid chain: Photosystem II extrinsic protein V (163 aa).

An N-terminal signal peptide occupies residues 1–26; it reads MFRRLIGVVVATALLTFQLIVGSATA. Positions 63, 66, 67, and 118 each coordinate heme c.

Belongs to the cytochrome c family. PsbV subfamily. As to quaternary structure, PSII is composed of 1 copy each of membrane proteins PsbA, PsbB, PsbC, PsbD, PsbE, PsbF, PsbH, PsbI, PsbJ, PsbK, PsbL, PsbM, PsbT, PsbX, PsbY, PsbZ, Psb30/Ycf12, peripheral proteins PsbO, CyanoQ (PsbQ), PsbU, PsbV and a large number of cofactors. It forms dimeric complexes. Requires heme c as cofactor.

Its subcellular location is the cellular thylakoid membrane. Functionally, one of the extrinsic, lumenal subunits of photosystem II (PSII). PSII is a light-driven water plastoquinone oxidoreductase, using light energy to abstract electrons from H(2)O, generating a proton gradient subsequently used for ATP formation. The extrinsic proteins stabilize the structure of photosystem II oxygen-evolving complex (OEC), the ion environment of oxygen evolution and protect the OEC against heat-induced inactivation. Low-potential cytochrome c that plays a role in the OEC of PSII. The chain is Photosystem II extrinsic protein V from Nostoc sp. (strain PCC 7120 / SAG 25.82 / UTEX 2576).